The following is a 264-amino-acid chain: Undecaprenyl-diphosphatase (264 aa).

A run of 7 helical transmembrane segments spans residues 34–54, 75–95, 104–124, 137–157, 180–200, 207–227, and 243–263; these read LLNL…MGSI, LLYL…LYII, YDPS…GLYI, LSLK…LPGV, YSYL…ILFS, VISL…FIIG, and IYII…LTIL.

It belongs to the UppP family.

It is found in the cell membrane. It catalyses the reaction di-trans,octa-cis-undecaprenyl diphosphate + H2O = di-trans,octa-cis-undecaprenyl phosphate + phosphate + H(+). Its function is as follows. Catalyzes the dephosphorylation of undecaprenyl diphosphate (UPP). In Sulfurisphaera tokodaii (strain DSM 16993 / JCM 10545 / NBRC 100140 / 7) (Sulfolobus tokodaii), this protein is Undecaprenyl-diphosphatase.